We begin with the raw amino-acid sequence, 574 residues long: Mitochondrial distribution and morphology protein 34 (574 aa).

An SMP-LTD domain is found at 1–195 (MAFNFNWSPL…LPAIIHRLSL (195 aa)). 3 disordered regions span residues 210 to 233 (RESP…KDPV), 301 to 403 (EGAA…TPPT), and 479 to 515 (SADG…ESNA). Composition is skewed to low complexity over residues 212 to 224 (SPAA…GEDP), 302 to 314 (GAAS…GSPV), and 323 to 334 (SSPLSSLQDASS). Residues 335-345 (VLSLQNRSTTP) are compositionally biased toward polar residues. Positions 346–359 (GSSFSGYGLSLGAG) are enriched in low complexity. The span at 360–373 (RHSKTRPTRKRKKR) shows a compositional bias: basic residues. Over residues 374 to 385 (VVDLRKHNKPAD) the composition is skewed to basic and acidic residues. Positions 393–403 (STFTESTTPPT) are enriched in low complexity. Polar residues predominate over residues 484 to 493 (KTSSQQQPIS).

Belongs to the MDM34 family. As to quaternary structure, component of the ER-mitochondria encounter structure (ERMES) or MDM complex, composed of MMM1, MDM10, MDM12 and MDM34.

The protein resides in the mitochondrion outer membrane. In terms of biological role, component of the ERMES/MDM complex, which serves as a molecular tether to connect the endoplasmic reticulum (ER) and mitochondria. Components of this complex are involved in the control of mitochondrial shape and protein biogenesis, and function in nonvesicular lipid trafficking between the ER and mitochondria. MDM34 is required for the interaction of the ER-resident membrane protein MMM1 and the outer mitochondrial membrane-resident beta-barrel protein MDM10. In Coccidioides immitis (strain RS) (Valley fever fungus), this protein is Mitochondrial distribution and morphology protein 34.